Here is a 658-residue protein sequence, read N- to C-terminus: UvrABC system protein B (658 aa).

The Helicase ATP-binding domain occupies Lys-25 to Met-178. Position 38–45 (Gly-38–Thr-45) interacts with ATP. Positions His-91–Ile-114 match the Beta-hairpin motif. Positions Gln-433–Lys-607 constitute a Helicase C-terminal domain. The region spanning Glu-623–Leu-658 is the UVR domain.

It belongs to the UvrB family. As to quaternary structure, forms a heterotetramer with UvrA during the search for lesions. Interacts with UvrC in an incision complex.

It localises to the cytoplasm. Functionally, the UvrABC repair system catalyzes the recognition and processing of DNA lesions. A damage recognition complex composed of 2 UvrA and 2 UvrB subunits scans DNA for abnormalities. Upon binding of the UvrA(2)B(2) complex to a putative damaged site, the DNA wraps around one UvrB monomer. DNA wrap is dependent on ATP binding by UvrB and probably causes local melting of the DNA helix, facilitating insertion of UvrB beta-hairpin between the DNA strands. Then UvrB probes one DNA strand for the presence of a lesion. If a lesion is found the UvrA subunits dissociate and the UvrB-DNA preincision complex is formed. This complex is subsequently bound by UvrC and the second UvrB is released. If no lesion is found, the DNA wraps around the other UvrB subunit that will check the other stand for damage. This is UvrABC system protein B from Helicobacter acinonychis (strain Sheeba).